Reading from the N-terminus, the 340-residue chain is Phenylalanine--tRNA ligase alpha subunit (340 aa).

Glutamate 255 lines the Mg(2+) pocket.

Belongs to the class-II aminoacyl-tRNA synthetase family. Phe-tRNA synthetase alpha subunit type 1 subfamily. In terms of assembly, tetramer of two alpha and two beta subunits. It depends on Mg(2+) as a cofactor.

The protein localises to the cytoplasm. It catalyses the reaction tRNA(Phe) + L-phenylalanine + ATP = L-phenylalanyl-tRNA(Phe) + AMP + diphosphate + H(+). This Desulfitobacterium hafniense (strain Y51) protein is Phenylalanine--tRNA ligase alpha subunit.